The following is a 222-amino-acid chain: Phosphoenolpyruvate guanylyltransferase (222 aa).

Phosphoenolpyruvate is bound by residues Thr-134, Gly-150, and Ser-153.

This sequence belongs to the CofC family.

The catalysed reaction is phosphoenolpyruvate + GTP + H(+) = enolpyruvoyl-2-diphospho-5'-guanosine + diphosphate. It functions in the pathway cofactor biosynthesis; coenzyme F420 biosynthesis. Its function is as follows. Guanylyltransferase that catalyzes the activation of phosphoenolpyruvate (PEP) as enolpyruvoyl-2-diphospho-5'-guanosine, via the condensation of PEP with GTP. It is involved in the biosynthesis of coenzyme F420, a hydride carrier cofactor. The chain is Phosphoenolpyruvate guanylyltransferase from Roseiflexus sp. (strain RS-1).